We begin with the raw amino-acid sequence, 99 residues long: Protein SPIRAL1-like 5 (99 aa).

The span at 1-12 shows a compositional bias: gly residues; the sequence is MSRGGSFGGGQS. The interval 1 to 99 is disordered; sequence MSRGGSFGGG…SSLGYLFGDK (99 aa). Over residues 27 to 39 the composition is skewed to pro residues; that stretch reads TPAPPVAPKPAPP. Residues 56 to 73 show a composition bias toward polar residues; the sequence is KISNNNYQRVQGQNSGNF. Residue Ser58 is modified to Phosphoserine.

Belongs to the SPIRAL1 family. As to expression, expressed exclusively in stems and flowers.

Its function is as follows. Acts redundantly with SPR1 in maintaining the cortical microtubules organization essential for anisotropic cell growth. The sequence is that of Protein SPIRAL1-like 5 (SP1L5) from Arabidopsis thaliana (Mouse-ear cress).